Here is a 99-residue protein sequence, read N- to C-terminus: Aspartyl/glutamyl-tRNA(Asn/Gln) amidotransferase subunit C (99 aa).

Belongs to the GatC family. As to quaternary structure, heterotrimer of A, B and C subunits.

It carries out the reaction L-glutamyl-tRNA(Gln) + L-glutamine + ATP + H2O = L-glutaminyl-tRNA(Gln) + L-glutamate + ADP + phosphate + H(+). The catalysed reaction is L-aspartyl-tRNA(Asn) + L-glutamine + ATP + H2O = L-asparaginyl-tRNA(Asn) + L-glutamate + ADP + phosphate + 2 H(+). Its function is as follows. Allows the formation of correctly charged Asn-tRNA(Asn) or Gln-tRNA(Gln) through the transamidation of misacylated Asp-tRNA(Asn) or Glu-tRNA(Gln) in organisms which lack either or both of asparaginyl-tRNA or glutaminyl-tRNA synthetases. The reaction takes place in the presence of glutamine and ATP through an activated phospho-Asp-tRNA(Asn) or phospho-Glu-tRNA(Gln). The sequence is that of Aspartyl/glutamyl-tRNA(Asn/Gln) amidotransferase subunit C from Paraburkholderia phytofirmans (strain DSM 17436 / LMG 22146 / PsJN) (Burkholderia phytofirmans).